The chain runs to 209 residues: Large ribosomal subunit protein uL3 (209 aa).

A disordered region spans residues 128-163; that stretch reads AHRGPMTHGSKFHRAVGSMGASSDPSRTFKNKRMPG.

It belongs to the universal ribosomal protein uL3 family. Part of the 50S ribosomal subunit. Forms a cluster with proteins L14 and L19.

In terms of biological role, one of the primary rRNA binding proteins, it binds directly near the 3'-end of the 23S rRNA, where it nucleates assembly of the 50S subunit. This is Large ribosomal subunit protein uL3 from Clostridium botulinum (strain 657 / Type Ba4).